Consider the following 432-residue polypeptide: tRNA(Ile)-lysidine synthase (432 aa).

19–24 (STGIDS) serves as a coordination point for ATP.

Belongs to the tRNA(Ile)-lysidine synthase family.

It is found in the cytoplasm. The enzyme catalyses cytidine(34) in tRNA(Ile2) + L-lysine + ATP = lysidine(34) in tRNA(Ile2) + AMP + diphosphate + H(+). Its function is as follows. Ligates lysine onto the cytidine present at position 34 of the AUA codon-specific tRNA(Ile) that contains the anticodon CAU, in an ATP-dependent manner. Cytidine is converted to lysidine, thus changing the amino acid specificity of the tRNA from methionine to isoleucine. The protein is tRNA(Ile)-lysidine synthase of Staphylococcus epidermidis (strain ATCC 35984 / DSM 28319 / BCRC 17069 / CCUG 31568 / BM 3577 / RP62A).